The chain runs to 214 residues: uncharacterized protein (214 aa).

Residues 39–68 (KLRSKKEVEEKIKEVDRELEEVVNAGVSIN) adopt a coiled-coil conformation. Over residues 99–114 (EIKVEAPEPDEEKLPD) the composition is skewed to basic and acidic residues. The interval 99 to 162 (EIKVEAPEPD…EEVEFDEEDD (64 aa)) is disordered. The segment covering 123–162 (SDLDMDFEDLGQEIPLDADEQEEEEEEEEVEEVEFDEEDD) has biased composition (acidic residues). Positions 138-212 (LDADEQEEEE…IQRLKVLSGG (75 aa)) form a coiled coil.

This is an uncharacterized protein from Archaeoglobus fulgidus (strain ATCC 49558 / DSM 4304 / JCM 9628 / NBRC 100126 / VC-16).